The following is an 854-amino-acid chain: Arsenate respiratory reductase molybdopterin-containing subunit ArrA (854 aa).

A signal peptide (tat-type signal) is located at residues M1–A41. Residues G54–D110 form the 4Fe-4S Mo/W bis-MGD-type domain. [4Fe-4S] cluster contacts are provided by C61, C64, C68, and C96. R165 contributes to the arsenite binding site. Residue Y166 participates in arsenate binding. H189 contacts arsenite. Position 190 (S190) interacts with arsenate. Mo-bis(molybdopterin guanine dinucleotide) is bound at residue C193. K198 contacts arsenate. Y210 provides a ligand contact to arsenite.

The protein belongs to the prokaryotic molybdopterin-containing oxidoreductase family. As to quaternary structure, heterodimer composed of one large subunit (ArrA) and one small subunit (ArrB). [4Fe-4S] cluster serves as cofactor. Requires Mo-bis(molybdopterin guanine dinucleotide) as cofactor. Predicted to be exported by the Tat system. The position of the signal peptide cleavage has not been experimentally proven.

The protein resides in the periplasm. The catalysed reaction is arsenite + A + H2O = arsenate + AH2 + H(+). Phosphate is a competitive inhibitor. Component of the arsenate respiratory reductase (Arr) complex, which catalyzes the reduction of arsenate (As(V)) to arsenite (As(III)). ArrA is the arsenate-binding subunit. The periplasmic localization of this complex may allow the cell to couple arsenate reduction to energy production before arsenate can be transported to the cell cytoplasm and enter the ars detoxification pathway, an energy-requiring process. The chain is Arsenate respiratory reductase molybdopterin-containing subunit ArrA from Shewanella sp. (strain ANA-3).